The following is a 149-amino-acid chain: MAKKITGYVKLQVPAGAANPSPPIGPALGQRGLNIMEFCKAFNAKTAQMEKGTPIPVIITAYQDRSFTFEMKQPPVTFFLKKAAGLKLGKKPASGSKTPGKGPTVGKISEAQLREIAEKKMPDLNCDTVESAVAMIRGSARAMGLEVVA.

The protein belongs to the universal ribosomal protein uL11 family. As to quaternary structure, part of the ribosomal stalk of the 50S ribosomal subunit. Interacts with L10 and the large rRNA to form the base of the stalk. L10 forms an elongated spine to which L12 dimers bind in a sequential fashion forming a multimeric L10(L12)X complex. One or more lysine residues are methylated.

Forms part of the ribosomal stalk which helps the ribosome interact with GTP-bound translation factors. The protein is Large ribosomal subunit protein uL11 of Methylobacterium radiotolerans (strain ATCC 27329 / DSM 1819 / JCM 2831 / NBRC 15690 / NCIMB 10815 / 0-1).